The chain runs to 678 residues: uncharacterized protein (678 aa).

The next 8 membrane-spanning stretches (helical) occupy residues 228–250 (FFVI…FSFL), 263–285 (LAMW…VATQ), 300–322 (STGA…LSCV), 334–356 (MLHN…AVLF), 361–380 (FSLS…FFSA), 387–405 (RIML…YAYL), 420–439 (NVFF…TLFF), and 455–477 (NLLL…SVSL). A disordered region spans residues 653–678 (PSSQGVHATPEKNACIRDETVPNLQE).

The protein resides in the cell membrane. This is an uncharacterized protein from Treponema pallidum (strain Nichols).